A 454-amino-acid chain; its full sequence is MINQDTIAAQATAPGRGGVGIIRVSGSLAKSVAEKVVGKIPKVRYADYVPFKSLAGEQLDQGIAIYFAGPNSFTGEDVLELQGHGGPVVLDMLLKEISKIEGVRLAKPGEFSERAFMNDKLDLTQAEAIADLINATSEQAAKSALQSLQGEFSKHIETLVEKVIHLRMYVEAAIDFPDEEIDFLSDGKVSGDLDAIIAQLNTVTDQAKQGSIMREGMRVVIAGRPNAGKSSLLNALAGREAAIVTEIAGTTRDVLREHIHIDGMPLHIIDTAGLRESPDLVEQIGIERAWDEINQADRVLFMLDGTDTIDTDPHKIWPEFMAKLPVGLGVTVIRNKADLSGDVVGMDQNQQYPVISLSAKNADGIELVREHLKACIGFDGATEGGFMARRRHLDALEHAAYHLDTGKAQLEMHIAGEILAEELRLTQQYLNEITGEFTSDDLLGKIFSSFCIGK.

Residues Arg-23, Glu-80, and Lys-120 each coordinate (6S)-5-formyl-5,6,7,8-tetrahydrofolate. The TrmE-type G domain maps to 216–377; that stretch reads GMRVVIAGRP…VREHLKACIG (162 aa). Residue Asn-226 participates in K(+) binding. Residues 226 to 231, 245 to 251, 270 to 273, and 335 to 338 each bind GTP; these read NAGKSS, TEIAGTT, DTAG, and NKAD. Ser-230 lines the Mg(2+) pocket. Positions 245, 247, and 250 each coordinate K(+). Residue Thr-251 coordinates Mg(2+). Lys-454 is a binding site for (6S)-5-formyl-5,6,7,8-tetrahydrofolate.

It belongs to the TRAFAC class TrmE-Era-EngA-EngB-Septin-like GTPase superfamily. TrmE GTPase family. Homodimer. Heterotetramer of two MnmE and two MnmG subunits. It depends on K(+) as a cofactor.

Its subcellular location is the cytoplasm. Exhibits a very high intrinsic GTPase hydrolysis rate. Involved in the addition of a carboxymethylaminomethyl (cmnm) group at the wobble position (U34) of certain tRNAs, forming tRNA-cmnm(5)s(2)U34. The protein is tRNA modification GTPase MnmE of Pseudoalteromonas translucida (strain TAC 125).